We begin with the raw amino-acid sequence, 89 residues long: Mapacalcine (89 aa).

Position 89 is a glutamine amide (Gln89).

In terms of assembly, homodimer. Post-translationally, contains disulfide bonds which may also be involved in dimerization.

Its function is as follows. Blocks calcium currents via interaction with a yet unknown target protein. Has no effect on L-type, T-type, N-type or P/Q-type voltage-gated calcium channels (VGCC). Has no effect on voltage-gated potassium or chloride channels. Blocks non-L-type VGCC calcium currents in mouse duodenal myocytes (IC(50)=0.2 uM). Blocks calcium influx induced by hypoxia/reoxygenation in rat hepatocytes. In Pione vastifica (Boring sponge), this protein is Mapacalcine.